The following is a 94-amino-acid chain: Pyrimidine/purine nucleoside phosphorylase (94 aa).

The protein belongs to the nucleoside phosphorylase PpnP family.

It carries out the reaction a purine D-ribonucleoside + phosphate = a purine nucleobase + alpha-D-ribose 1-phosphate. The catalysed reaction is adenosine + phosphate = alpha-D-ribose 1-phosphate + adenine. The enzyme catalyses cytidine + phosphate = cytosine + alpha-D-ribose 1-phosphate. It catalyses the reaction guanosine + phosphate = alpha-D-ribose 1-phosphate + guanine. It carries out the reaction inosine + phosphate = alpha-D-ribose 1-phosphate + hypoxanthine. The catalysed reaction is thymidine + phosphate = 2-deoxy-alpha-D-ribose 1-phosphate + thymine. The enzyme catalyses uridine + phosphate = alpha-D-ribose 1-phosphate + uracil. It catalyses the reaction xanthosine + phosphate = alpha-D-ribose 1-phosphate + xanthine. Its function is as follows. Catalyzes the phosphorolysis of diverse nucleosides, yielding D-ribose 1-phosphate and the respective free bases. Can use uridine, adenosine, guanosine, cytidine, thymidine, inosine and xanthosine as substrates. Also catalyzes the reverse reactions. The sequence is that of Pyrimidine/purine nucleoside phosphorylase from Escherichia coli (strain ATCC 8739 / DSM 1576 / NBRC 3972 / NCIMB 8545 / WDCM 00012 / Crooks).